Consider the following 345-residue polypeptide: D-alanine--D-alanine ligase (345 aa).

The region spanning lysine 133–glutamine 340 is the ATP-grasp domain. Proline 162 to tyrosine 211 contacts ATP. Positions 284, 296, and 298 each coordinate Mg(2+).

Belongs to the D-alanine--D-alanine ligase family. Mg(2+) is required as a cofactor. Requires Mn(2+) as cofactor.

The protein localises to the cytoplasm. It carries out the reaction 2 D-alanine + ATP = D-alanyl-D-alanine + ADP + phosphate + H(+). The protein operates within cell wall biogenesis; peptidoglycan biosynthesis. Functionally, cell wall formation. The chain is D-alanine--D-alanine ligase from Wolinella succinogenes (strain ATCC 29543 / DSM 1740 / CCUG 13145 / JCM 31913 / LMG 7466 / NCTC 11488 / FDC 602W) (Vibrio succinogenes).